The sequence spans 328 residues: Putative gluconeogenesis factor (328 aa).

Belongs to the gluconeogenesis factor family.

Its subcellular location is the cytoplasm. Required for morphogenesis under gluconeogenic growth conditions. The chain is Putative gluconeogenesis factor from Aquifex aeolicus (strain VF5).